Here is a 399-residue protein sequence, read N- to C-terminus: Probable inactive 2-oxoglutarate-dependent dioxygenase AOP2 (399 aa).

The Fe2OG dioxygenase domain occupies 248 to 345; it reads GGDDVEANDD…RYTAAIFTCP (98 aa). H268, D270, and H325 together coordinate Fe cation. A 2-oxoglutarate-binding site is contributed by R336.

It belongs to the iron/ascorbate-dependent oxidoreductase family. It depends on Fe(2+) as a cofactor.

In Arabidopsis thaliana (Mouse-ear cress), this protein is Probable inactive 2-oxoglutarate-dependent dioxygenase AOP2 (AOP2).